We begin with the raw amino-acid sequence, 661 residues long: PAN2-PAN3 deadenylation complex subunit pan3 (661 aa).

Disordered stretches follow at residues 1–29 (MASV…NAKD) and 53–131 (DPHK…RQDA). A C3H1-type zinc finger spans residues 26-55 (NAKDTLCRNVTIYGRCRYEDKGCAFNHDPH). Residues 63-83 (NASKKRFNVDSPSFTPSLLPS) carry the PABPC-interacting motif-2 (PAM-2) motif. Low complexity predominate over residues 77 to 104 (TPSLLPSNGSSPTSSSSSLKKSSTISPK). Residues 115–126 (TAASRSNTSTPG) show a composition bias toward polar residues. The pseudokinase domain stretch occupies residues 263-524 (QTLPNTQLPA…NIDILINGIS (262 aa)). Residues R315, 364–371 (DYHPLSKT), and 424–425 (SK) each bind ATP. Residues 525–563 (SQLMSTFDSALHLDDQLTSDLGRELENGRLVRLLTKLNF) adopt a coiled-coil conformation. The tract at residues 564–661 (INERPEHEHD…ALLRPSRRPH (98 aa)) is knob domain.

Belongs to the protein kinase superfamily. PAN3 family. In terms of assembly, homodimer. Forms a heterotrimer with a catalytic subunit pan2 to form the poly(a)-nuclease (PAN) deadenylation complex. Interacts (via PAM-2 motif) with poly(A)-binding protein pab1 (via PABC domain), conferring substrate specificity of the enzyme complex.

It is found in the cytoplasm. In terms of biological role, regulatory subunit of the poly(A)-nuclease (PAN) deadenylation complex, one of two cytoplasmic mRNA deadenylases involved in mRNA turnover. PAN specifically shortens poly(A) tails of RNA and the activity is stimulated by poly(A)-binding protein pab1. PAN deadenylation is followed by rapid degradation of the shortened mRNA tails by the CCR4-NOT complex. Deadenylated mRNAs are then degraded by two alternative mechanisms, namely exosome-mediated 3'-5' exonucleolytic degradation, or deadenylation-dependent mRNA decaping and subsequent 5'-3' exonucleolytic degradation by XRN1. May also be involved in post-transcriptional maturation of mRNA poly(A) tails. pan3 acts as a positive regulator for PAN activity, recruiting the catalytic subunit pan2 to mRNA via its interaction with RNA and with pab1. The sequence is that of PAN2-PAN3 deadenylation complex subunit pan3 from Emericella nidulans (strain FGSC A4 / ATCC 38163 / CBS 112.46 / NRRL 194 / M139) (Aspergillus nidulans).